The chain runs to 207 residues: Thymidine kinase (207 aa).

ATP contacts are provided by residues 15-22 and 88-91; these read GSMFSGKS and DEVQ. Residue Glu89 is the Proton acceptor of the active site. 4 residues coordinate Zn(2+): Cys145, Cys148, Cys183, and His186.

This sequence belongs to the thymidine kinase family. In terms of assembly, homotetramer.

It is found in the cytoplasm. The enzyme catalyses thymidine + ATP = dTMP + ADP + H(+). The sequence is that of Thymidine kinase from Oceanobacillus iheyensis (strain DSM 14371 / CIP 107618 / JCM 11309 / KCTC 3954 / HTE831).